A 196-amino-acid chain; its full sequence is NADH-quinone oxidoreductase subunit B (196 aa).

C75, C76, C140, and C170 together coordinate [4Fe-4S] cluster.

Belongs to the complex I 20 kDa subunit family. NDH-1 is composed of 14 different subunits. Subunits NuoB, C, D, E, F, and G constitute the peripheral sector of the complex. [4Fe-4S] cluster is required as a cofactor.

It localises to the cell inner membrane. It catalyses the reaction a quinone + NADH + 5 H(+)(in) = a quinol + NAD(+) + 4 H(+)(out). Its function is as follows. NDH-1 shuttles electrons from NADH, via FMN and iron-sulfur (Fe-S) centers, to quinones in the respiratory chain. Couples the redox reaction to proton translocation (for every two electrons transferred, four hydrogen ions are translocated across the cytoplasmic membrane), and thus conserves the redox energy in a proton gradient. This is NADH-quinone oxidoreductase subunit B from Caulobacter sp. (strain K31).